The following is a 124-amino-acid chain: Small ribosomal subunit protein uS13 (124 aa).

The interval 95-124 (GLPVRGQRTKTNARTRKGPKRTIAGKKKAR) is disordered.

It belongs to the universal ribosomal protein uS13 family. Part of the 30S ribosomal subunit. Forms a loose heterodimer with protein S19. Forms two bridges to the 50S subunit in the 70S ribosome.

In terms of biological role, located at the top of the head of the 30S subunit, it contacts several helices of the 16S rRNA. In the 70S ribosome it contacts the 23S rRNA (bridge B1a) and protein L5 of the 50S subunit (bridge B1b), connecting the 2 subunits; these bridges are implicated in subunit movement. Contacts the tRNAs in the A and P-sites. The protein is Small ribosomal subunit protein uS13 of Mycobacterium marinum (strain ATCC BAA-535 / M).